A 508-amino-acid polypeptide reads, in one-letter code: Photosystem II CP47 reaction center protein (508 aa).

The next 6 helical transmembrane spans lie at 21–36 (AVHI…WAGS), 101–115 (IVFS…IWHW), 140–156 (GIHL…FGAF), 203–218 (IAAG…FHLS), 237–252 (VLSS…AFIV), and 457–472 (TFAL…HGAR).

This sequence belongs to the PsbB/PsbC family. PsbB subfamily. PSII is composed of 1 copy each of membrane proteins PsbA, PsbB, PsbC, PsbD, PsbE, PsbF, PsbH, PsbI, PsbJ, PsbK, PsbL, PsbM, PsbT, PsbX, PsbY, PsbZ, Psb30/Ycf12, at least 3 peripheral proteins of the oxygen-evolving complex and a large number of cofactors. It forms dimeric complexes. The cofactor is Binds multiple chlorophylls. PSII binds additional chlorophylls, carotenoids and specific lipids..

Its subcellular location is the plastid. It localises to the chloroplast thylakoid membrane. In terms of biological role, one of the components of the core complex of photosystem II (PSII). It binds chlorophyll and helps catalyze the primary light-induced photochemical processes of PSII. PSII is a light-driven water:plastoquinone oxidoreductase, using light energy to abstract electrons from H(2)O, generating O(2) and a proton gradient subsequently used for ATP formation. This Gnetum parvifolium (Small-leaved jointfir) protein is Photosystem II CP47 reaction center protein.